Consider the following 122-residue polypeptide: Small ribosomal subunit protein uS13 (122 aa).

The tract at residues 95–122 is disordered; it reads GLPVHGQRTHTNARTRKGPRRGAVGKKK.

This sequence belongs to the universal ribosomal protein uS13 family. As to quaternary structure, part of the 30S ribosomal subunit. Forms a loose heterodimer with protein S19. Forms two bridges to the 50S subunit in the 70S ribosome.

Its function is as follows. Located at the top of the head of the 30S subunit, it contacts several helices of the 16S rRNA. In the 70S ribosome it contacts the 23S rRNA (bridge B1a) and protein L5 of the 50S subunit (bridge B1b), connecting the 2 subunits; these bridges are implicated in subunit movement. Contacts the tRNAs in the A and P-sites. The chain is Small ribosomal subunit protein uS13 from Nitratidesulfovibrio vulgaris (strain DSM 19637 / Miyazaki F) (Desulfovibrio vulgaris).